The sequence spans 252 residues: MSLPATFDLTPEDAQLLLAANTHLGARNVQVHQEPYVFNARPDGVHVINVGKTWEKLVLAARIIAAIPNPEDVVAISSRTYGQRAVLKFAAHTGATPIAGRFTPGSFTNYITRSFKEPRLVIVTDPRLDAQAIKEASYVNIPVIALTDLDSPSEFVDVAIPCNNRGKHSIGLIWYLLAREVLRLRGALVDRTQPWSIMPDLYFYRNPEEVEQVAEEAAAAEEGEEEEVKEEVTEGQAEATEWAEENADNVEW.

Ser2 is subject to N-acetylserine. Acidic residues-rich tracts occupy residues 213-229 (VAEE…EEVK) and 241-252 (EWAEENADNVEW). The tract at residues 213–252 (VAEEAAAAEEGEEEEVKEEVTEGQAEATEWAEENADNVEW) is disordered.

It belongs to the universal ribosomal protein uS2 family. In terms of assembly, component of the small ribosomal subunit. Mature ribosomes consist of a small (40S) and a large (60S) subunit. The 40S subunit contains about 33 different proteins and 1 molecule of RNA (18S). The 60S subunit contains about 49 different proteins and 3 molecules of RNA (25S, 5.8S and 5S). Interacts with RPS21.

The protein localises to the cytoplasm. Required for the assembly and/or stability of the 40S ribosomal subunit. Required for the processing of the 20S rRNA-precursor to mature 18S rRNA in a late step of the maturation of 40S ribosomal subunits. The chain is Small ribosomal subunit protein uS2B from Saccharomyces cerevisiae (strain RM11-1a) (Baker's yeast).